Reading from the N-terminus, the 89-residue chain is Long neurotoxin homolog Pa ID (89 aa).

The N-terminal stretch at 1-21 is a signal peptide; sequence MKTLLLTLVVVTIMCLDLGYT. Cystine bridges form between Cys-24–Cys-42, Cys-35–Cys-63, Cys-48–Cys-52, Cys-67–Cys-78, and Cys-79–Cys-84.

It belongs to the three-finger toxin family. Long-chain subfamily. Type II alpha-neurotoxin sub-subfamily. In terms of tissue distribution, expressed by the venom gland.

It localises to the secreted. Binds with high affinity to muscular (alpha-1/CHRNA1) and neuronal (alpha-7/CHRNA7) nicotinic acetylcholine receptor (nAChR) and inhibits acetylcholine from binding to the receptor, thereby impairing neuromuscular and neuronal transmission. The protein is Long neurotoxin homolog Pa ID of Pseudechis australis (Mulga snake).